The primary structure comprises 870 residues: Phenylalanine--tRNA ligase beta subunit (870 aa).

The tRNA-binding domain occupies 39-148; it reads AADLQKFEVA…EDAVVGEPFT (110 aa). The B5 domain maps to 427–551; sequence PAKKTLDFPA…RIYGYDKIES (125 aa). The region spanning 450-498 is the RPE1 insert domain; it reads LLHNEANKGEFVGNTEHSIAAYKEVREDASTGLTPKLPLEASYVKGLNI. Residues Asp-529, Asp-535, Glu-538, and Glu-539 each coordinate Mg(2+). The region spanning 776-869 is the FDX-ACB domain; it reads SDYQANFRDY…IEQKFQGTLR (94 aa).

It belongs to the phenylalanyl-tRNA synthetase beta subunit family. Type 1 subfamily. In terms of assembly, tetramer of two alpha and two beta subunits. The cofactor is Mg(2+).

The protein localises to the cytoplasm. The enzyme catalyses tRNA(Phe) + L-phenylalanine + ATP = L-phenylalanyl-tRNA(Phe) + AMP + diphosphate + H(+). This Rickettsia bellii (strain RML369-C) protein is Phenylalanine--tRNA ligase beta subunit (pheT).